The sequence spans 391 residues: Anhydro-N-acetylmuramic acid kinase (391 aa).

Residue 9-16 participates in ATP binding; the sequence is GTSYDAVE.

It belongs to the anhydro-N-acetylmuramic acid kinase family.

The enzyme catalyses 1,6-anhydro-N-acetyl-beta-muramate + ATP + H2O = N-acetyl-D-muramate 6-phosphate + ADP + H(+). The protein operates within amino-sugar metabolism; 1,6-anhydro-N-acetylmuramate degradation. It participates in cell wall biogenesis; peptidoglycan recycling. In terms of biological role, catalyzes the specific phosphorylation of 1,6-anhydro-N-acetylmuramic acid (anhMurNAc) with the simultaneous cleavage of the 1,6-anhydro ring, generating MurNAc-6-P. Is required for the utilization of anhMurNAc either imported from the medium or derived from its own cell wall murein, and thus plays a role in cell wall recycling. The protein is Anhydro-N-acetylmuramic acid kinase of Streptomyces coelicolor (strain ATCC BAA-471 / A3(2) / M145).